Consider the following 160-residue polypeptide: Protein max (160 aa).

Acidic residues predominate over residues 1–13; sequence MSDNDDIEVESDE. The tract at residues 1 to 40 is disordered; the sequence is MSDNDDIEVESDEEQPRFQSAADKRAHHNALERKRRDHIK. Ser-2 carries the N-acetylserine modification. Phosphoserine occurs at positions 2 and 11. The region spanning 23-74 is the bHLH domain; the sequence is DKRAHHNALERKRRDHIKDSFHSLRDSVPSLQGEKASRAQILDKATEYIQYM. Basic and acidic residues predominate over residues 29 to 40; sequence NALERKRRDHIK. Lys-66 bears the N6-acetyllysine mark. Residues 81-102 are leucine-zipper; that stretch reads HQQDIDDLKRQNALLEQQVRAL. Positions 103 to 160 are disordered; sequence EKARSSAQLQTNYPSSDNSLYTNAKGSTISAFDGGSDSSSESEPEEPQSRKKLRMEAS. Ser-107 bears the Phosphoserine mark. Residues 107 to 132 show a composition bias toward polar residues; that stretch reads SSAQLQTNYPSSDNSLYTNAKGSTIS. Positions 152–156 match the Nuclear localization signal motif; that stretch reads RKKLR. 2 positions are modified to N6-acetyllysine: Lys-153 and Lys-154.

The protein belongs to the MAX family. In terms of assembly, efficient DNA binding requires dimerization with another bHLH protein. Binds DNA as a heterodimer with MYC or MAD. Part of the E2F6.com-1 complex in G0 phase composed of E2F6, MGA, MAX, TFDP1, CBX3, BAT8, EUHMTASE1, RING1, RNF2, MBLR, L3MBTL2 and YAF2. Component of some MLL1/MLL complex, at least composed of the core components KMT2A/MLL1, ASH2L, HCFC1/HCF1, WDR5 and RBBP5, as well as the facultative components BACC1, CHD8, E2F6, HSP70, INO80C, KANSL1, LAS1L, MAX, MCRS1, MGA, MYST1/MOF, PELP1, PHF20, PRP31, RING2, RUVB1/TIP49A, RUVB2/TIP49B, SENP3, TAF1, TAF4, TAF6, TAF7, TAF9 and TEX10. Interacts with SPAG9. The heterodimer MYC:MAX interacts with ABI1; the interaction may enhance MYC:MAX transcriptional activity. In terms of processing, reversible lysine acetylation might regulate the nuclear-cytoplasmic shuttling of specific Max complexes. In terms of tissue distribution, high levels found in the brain, heart and lung while lower levels are seen in the liver, kidney and skeletal muscle.

The protein resides in the nucleus. Its subcellular location is the cell projection. It localises to the dendrite. In terms of biological role, transcription regulator. Forms a sequence-specific DNA-binding protein complex with MYC or MAD which recognizes the core sequence 5'-CAC[GA]TG-3'. The MYC:MAX complex is a transcriptional activator, whereas the MAD:MAX complex is a repressor. May repress transcription via the recruitment of a chromatin remodeling complex containing H3 'Lys-9' histone methyltransferase activity. Represses MYC transcriptional activity from E-box elements. The protein is Protein max of Homo sapiens (Human).